The chain runs to 55 residues: uncharacterized protein (55 aa).

Residues Met-1–Phe-25 form the signal peptide.

This is an uncharacterized protein from Bacillus subtilis (strain 168).